The sequence spans 1227 residues: Methionine synthase (1227 aa).

The Hcy-binding domain maps to 2 to 325 (SSKVEQLRAQ…EHIAAMSRAV (324 aa)). Cys-247, Cys-310, and Cys-311 together coordinate Zn(2+). Residues 356–617 (FVNVGERTNV…LPAELRDAVE (262 aa)) enclose the Pterin-binding domain. One can recognise a B12-binding N-terminal domain in the interval 650–744 (QQAEWRSWDV…FIEASKEKGS (95 aa)). Methylcob(III)alamin is bound by residues Glu-694, 756–760 (GDVHD), His-759, Ser-804, Thr-808, and Ala-860. In terms of domain architecture, B12-binding spans 746 to 881 (NGKMVIATVK…SDTQRDDFVA (136 aa)). An AdoMet activation domain is found at 897-1227 (KKPRTPPVTL…LAPNLGYDAD (331 aa)). S-adenosyl-L-methionine contacts are provided by residues Asp-946, Arg-1134, and 1189 to 1190 (YF).

The protein belongs to the vitamin-B12 dependent methionine synthase family. Methylcob(III)alamin serves as cofactor. Requires Zn(2+) as cofactor.

It catalyses the reaction (6S)-5-methyl-5,6,7,8-tetrahydrofolate + L-homocysteine = (6S)-5,6,7,8-tetrahydrofolate + L-methionine. It functions in the pathway amino-acid biosynthesis; L-methionine biosynthesis via de novo pathway; L-methionine from L-homocysteine (MetH route): step 1/1. In terms of biological role, catalyzes the transfer of a methyl group from methyl-cobalamin to homocysteine, yielding enzyme-bound cob(I)alamin and methionine. Subsequently, remethylates the cofactor using methyltetrahydrofolate. The chain is Methionine synthase (metH) from Salmonella typhimurium (strain LT2 / SGSC1412 / ATCC 700720).